We begin with the raw amino-acid sequence, 664 residues long: DNA mismatch repair protein MutL (664 aa).

Residues 382–447 form a disordered region; it reads RKAGQEQQLQ…YGEPAPSKQQ (66 aa). A compositionally biased stretch (polar residues) spans 427-436; that stretch reads RHTTSSNQSE.

This sequence belongs to the DNA mismatch repair MutL/HexB family.

Functionally, this protein is involved in the repair of mismatches in DNA. It is required for dam-dependent methyl-directed DNA mismatch repair. May act as a 'molecular matchmaker', a protein that promotes the formation of a stable complex between two or more DNA-binding proteins in an ATP-dependent manner without itself being part of a final effector complex. This Vibrio vulnificus (strain YJ016) protein is DNA mismatch repair protein MutL.